Here is a 143-residue protein sequence, read N- to C-terminus: HTH-type transcriptional regulator CueR (143 aa).

An HTH merR-type domain is found at 11–79 (TYRISELAAL…LSDIKDRLEN (69 aa)). Residues 14–33 (ISELAALAGVTKRTVDYYTN) constitute a DNA-binding region (H-T-H motif).

In terms of biological role, transcriptional activator of the copZA operon. In Bacillus subtilis (strain 168), this protein is HTH-type transcriptional regulator CueR (cueR).